The following is a 310-amino-acid chain: Cytochrome f (310 aa).

The first 27 residues, 1-27 (MRRHLSLFLGSLVIGLALLIAPAASWA), serve as a signal peptide directing secretion. Positions 28, 48, 51, and 52 each coordinate heme. The helical transmembrane segment at 277–297 (IYGLLAFFAAVALAQIMLVLK) threads the bilayer.

The protein belongs to the cytochrome f family. As to quaternary structure, the 4 large subunits of the cytochrome b6-f complex are cytochrome b6, subunit IV (17 kDa polypeptide, PetD), cytochrome f and the Rieske protein, while the 4 small subunits are PetG, PetL, PetM and PetN. The complex functions as a dimer. The cofactor is heme.

The protein resides in the cellular thylakoid membrane. Functionally, component of the cytochrome b6-f complex, which mediates electron transfer between photosystem II (PSII) and photosystem I (PSI), cyclic electron flow around PSI, and state transitions. This chain is Cytochrome f, found in Synechococcus sp. (strain CC9605).